Consider the following 153-residue polypeptide: uncharacterized protein (153 aa).

Positions 1 to 22 are cleaved as a signal peptide; that stretch reads MKMLKKGTAVLFVMIMAVMLVA. Cysteine 23 carries N-palmitoyl cysteine lipidation. Residue cysteine 23 is the site of S-diacylglycerol cysteine attachment. The segment at 117–153 is disordered; it reads DMNKIPGMSSNGDTSKGISMEESAKMLESQGYKEVSK. The segment covering 124 to 133 has biased composition (polar residues); the sequence is MSSNGDTSKG.

It to E.coli YehR.

Its subcellular location is the cell membrane. This is an uncharacterized protein from Listeria monocytogenes serovar 1/2a (strain ATCC BAA-679 / EGD-e).